Here is a 337-residue protein sequence, read N- to C-terminus: DNA-directed RNA polymerase subunit alpha (337 aa).

An alpha N-terminal domain (alpha-NTD) region spans residues 1–233; the sequence is MVREKVTVST…DLFIPFLHME (233 aa). The segment at 265–337 is alpha C-terminal domain (alpha-CTD); sequence KKIALKSIFI…FVIDLAKNKF (73 aa).

It belongs to the RNA polymerase alpha chain family. As to quaternary structure, in plastids the minimal PEP RNA polymerase catalytic core is composed of four subunits: alpha, beta, beta', and beta''. When a (nuclear-encoded) sigma factor is associated with the core the holoenzyme is formed, which can initiate transcription.

The protein resides in the plastid. It is found in the chloroplast. The enzyme catalyses RNA(n) + a ribonucleoside 5'-triphosphate = RNA(n+1) + diphosphate. Its function is as follows. DNA-dependent RNA polymerase catalyzes the transcription of DNA into RNA using the four ribonucleoside triphosphates as substrates. The polypeptide is DNA-directed RNA polymerase subunit alpha (Solanum lycopersicum (Tomato)).